We begin with the raw amino-acid sequence, 456 residues long: Adenylosuccinate synthetase isozyme 2 (456 aa).

The tract at residues 1–24 (MAFAETNPAASSLPNGDCGRPRAR) is disordered. GTP is bound by residues 39–45 (GDEGKGK) and 67–69 (GHT). Catalysis depends on aspartate 40, which acts as the Proton acceptor. Aspartate 40 and glycine 67 together coordinate Mg(2+). Aspartate 40 contributes to the substrate binding site. IMP-binding positions include 40 to 43 (DEGK), 65 to 68 (NAGH), threonine 162, arginine 176, asparagine 255, threonine 270, and arginine 334. Histidine 68 (proton donor) is an active-site residue. 330–336 (VTTGRKR) is a substrate binding site. Residues arginine 336, 362–364 (KLD), and 444–447 (GVGK) contribute to the GTP site.

This sequence belongs to the adenylosuccinate synthetase family. As to quaternary structure, homodimer. It depends on Mg(2+) as a cofactor. In terms of tissue distribution, widely expressed.

It is found in the cytoplasm. Its subcellular location is the mitochondrion. It catalyses the reaction IMP + L-aspartate + GTP = N(6)-(1,2-dicarboxyethyl)-AMP + GDP + phosphate + 2 H(+). It functions in the pathway purine metabolism; AMP biosynthesis via de novo pathway; AMP from IMP: step 1/2. Inhibited competitively by AMP and IMP and non-competitively by fructose 1,6-bisphosphate. In terms of biological role, plays an important role in the de novo pathway and in the salvage pathway of purine nucleotide biosynthesis. Catalyzes the first committed step in the biosynthesis of AMP from IMP. The polypeptide is Adenylosuccinate synthetase isozyme 2 (Sus scrofa (Pig)).